Here is a 774-residue protein sequence, read N- to C-terminus: Lysyl oxidase homolog 2 (774 aa).

Positions 1–24 (MEGFLGFNHNHCFIVLFFVSLSLA) are cleaved as a signal peptide. SRCR domains lie at 57–158 (LRLA…VVCS), 187–301 (IRPI…ASCV), 325–424 (VRLK…VRCN), and 434–543 (LRLV…VSCS). 9 cysteine pairs are disulfide-bonded: cysteine 83–cysteine 147, cysteine 96–cysteine 157, cysteine 127–cysteine 137, cysteine 217–cysteine 290, cysteine 230–cysteine 300, cysteine 264–cysteine 274, cysteine 350–cysteine 413, cysteine 363–cysteine 423, and cysteine 394–cysteine 404. Residue asparagine 287 is glycosylated (N-linked (GlcNAc...) asparagine). N-linked (GlcNAc...) asparagine glycosylation is present at asparagine 454. 3 disulfide bridges follow: cysteine 463–cysteine 529, cysteine 476–cysteine 542, and cysteine 510–cysteine 520. The tract at residues 547 to 751 (PDLVLNAELV…MYNSVHNGAN (205 aa)) is lysyl-oxidase like. Ca(2+) is bound by residues aspartate 548 and leucine 549. Disulfide bonds link cysteine 572/cysteine 624, cysteine 578/cysteine 694, cysteine 656/cysteine 672, and cysteine 662/cysteine 684. Residues histidine 625, histidine 627, and histidine 629 each coordinate Cu cation. N-linked (GlcNAc...) asparagine glycosylation is present at asparagine 643. The lysine tyrosylquinone (Lys-Tyr) cross-link spans 652–688 (KASFCLEDTECEADVQKQYECANFGEQGITVGCWDVY). Tyrosine 688 bears the 2',4',5'-topaquinone mark. Glutamate 721, aspartate 723, asparagine 726, and asparagine 727 together coordinate Ca(2+).

The protein belongs to the lysyl oxidase family. The cofactor is Cu cation. It depends on lysine tyrosylquinone residue as a cofactor. In terms of processing, the lysine tyrosylquinone cross-link (LTQ) is generated by condensation of the epsilon-amino group of a lysine with a topaquinone produced by oxidation of tyrosine.

It localises to the secreted. Its subcellular location is the extracellular space. The protein resides in the extracellular matrix. The protein localises to the basement membrane. It is found in the nucleus. It localises to the chromosome. Its subcellular location is the endoplasmic reticulum. The catalysed reaction is L-lysyl-[protein] + O2 + H2O = (S)-2-amino-6-oxohexanoyl-[protein] + H2O2 + NH4(+). Its function is as follows. Mediates the post-translational oxidative deamination of lysine residues on target proteins leading to the formation of deaminated lysine (allysine). Acts as a transcription corepressor and specifically mediates deamination of trimethylated 'Lys-4' of histone H3 (H3K4me3), a specific tag for epigenetic transcriptional activation. Shows no activity against histone H3 when it is trimethylated on 'Lys-9' (H3K9me3) or 'Lys-27' (H3K27me3) or when 'Lys-4' is monomethylated (H3K4me1) or dimethylated (H3K4me2). Also mediates deamination of methylated TAF10, a member of the transcription factor IID (TFIID) complex, which induces release of TAF10 from promoters, leading to inhibition of TFIID-dependent transcription. LOXL2-mediated deamination of TAF10 results in transcriptional repression of genes required for embryonic stem cell pluripotency including POU5F1/OCT4, NANOG, KLF4 and SOX2. Involved in epithelial to mesenchymal transition (EMT) via interaction with SNAI1 and participates in repression of E-cadherin CDH1, probably by mediating deamination of histone H3. During EMT, involved with SNAI1 in negatively regulating pericentromeric heterochromatin transcription. SNAI1 recruits LOXL2 to pericentromeric regions to oxidize histone H3 and repress transcription which leads to release of heterochromatin component CBX5/HP1A, enabling chromatin reorganization and acquisition of mesenchymal traits. Interacts with the endoplasmic reticulum protein HSPA5 which activates the IRE1-XBP1 pathway of the unfolded protein response, leading to expression of several transcription factors involved in EMT and subsequent EMT induction. When secreted into the extracellular matrix, promotes cross-linking of extracellular matrix proteins by mediating oxidative deamination of peptidyl lysine residues in precursors to fibrous collagen and elastin. Acts as a regulator of sprouting angiogenesis, probably via collagen IV scaffolding. Acts as a regulator of chondrocyte differentiation, probably by regulating expression of factors that control chondrocyte differentiation. This chain is Lysyl oxidase homolog 2 (LOXL2), found in Gallus gallus (Chicken).